The following is a 151-amino-acid chain: uncharacterized protein (151 aa).

To B.subtilis pcf and to sigma factors.

This is an uncharacterized protein from Bacillus subtilis (strain 168).